The chain runs to 489 residues: Probable cytochrome P450 CYP44 (489 aa).

Positions 12-31 are disordered; it reads VEKCPYSPTSSPNTPPRTFS. Residues 16–29 show a composition bias toward low complexity; that stretch reads PYSPTSSPNTPPRT. Position 438 (Cys-438) interacts with heme.

This sequence belongs to the cytochrome P450 family. Heme is required as a cofactor.

Its function is as follows. Cytochromes P450 are a group of heme-thiolate monooxygenases. They oxidize a variety of structurally unrelated compounds, including steroids, fatty acids, and xenobiotics. This Caenorhabditis elegans protein is Probable cytochrome P450 CYP44 (cyp-44A1).